Consider the following 45-residue polypeptide: uncharacterized protein (45 aa).

A helical membrane pass occupies residues I5 to S25.

It localises to the membrane. This is an uncharacterized protein from Haemophilus influenzae (strain ATCC 51907 / DSM 11121 / KW20 / Rd).